The sequence spans 398 residues: MAIDKKKKEKDVKVHNITDAEEKKKALETAIAFIEKQFGKGAIMKLGDARAMDVEAIPTGSMMLDMALGIGGVPRGRIIEIYGPESSGKTTVALHIIAETQKMGGEVAFIDVEHALDPVYAKNLGVDIDSMLVSQPDSGEQALEIAEALARSGAIDCIVIDSVAAMVTKAEIDGEMGDTHVGQLARLMSQAMRKLTGVVSKSNTTCVFINQVREKIGVMYGNPETTPGGRALKFYASVRIEVRRGEQIKDGGEVLGNRTKCKVVKNKVAPPFKECEFDIMYGKGISRVGEVLDTAVDLGIVKKGGAWFSYEDYKLGQGRDNSKQFLLDHPDIMAEIENKIKASSAEMIAAAGQKNDKKSKLEEKANAGAGISEASEPDSSAEEDFEEFAPIDIGSLGE.

83 to 90 (GPESSGKT) contributes to the ATP binding site. The segment at 351–398 (AGQKNDKKSKLEEKANAGAGISEASEPDSSAEEDFEEFAPIDIGSLGE) is disordered. Residues 354 to 365 (KNDKKSKLEEKA) show a composition bias toward basic and acidic residues. Over residues 375-389 (SEPDSSAEEDFEEFA) the composition is skewed to acidic residues.

It belongs to the RecA family.

It localises to the cytoplasm. In terms of biological role, can catalyze the hydrolysis of ATP in the presence of single-stranded DNA, the ATP-dependent uptake of single-stranded DNA by duplex DNA, and the ATP-dependent hybridization of homologous single-stranded DNAs. It interacts with LexA causing its activation and leading to its autocatalytic cleavage. This is Protein RecA from Ruminococcus albus (strain ATCC 27210 / DSM 20455 / JCM 14654 / NCDO 2250 / 7).